The primary structure comprises 556 residues: 2-succinyl-5-enolpyruvyl-6-hydroxy-3-cyclohexene-1-carboxylate synthase (556 aa).

This sequence belongs to the TPP enzyme family. MenD subfamily. Homodimer. Mg(2+) serves as cofactor. Requires Mn(2+) as cofactor. It depends on thiamine diphosphate as a cofactor.

It catalyses the reaction isochorismate + 2-oxoglutarate + H(+) = 5-enolpyruvoyl-6-hydroxy-2-succinyl-cyclohex-3-ene-1-carboxylate + CO2. It functions in the pathway quinol/quinone metabolism; 1,4-dihydroxy-2-naphthoate biosynthesis; 1,4-dihydroxy-2-naphthoate from chorismate: step 2/7. It participates in quinol/quinone metabolism; menaquinone biosynthesis. Catalyzes the thiamine diphosphate-dependent decarboxylation of 2-oxoglutarate and the subsequent addition of the resulting succinic semialdehyde-thiamine pyrophosphate anion to isochorismate to yield 2-succinyl-5-enolpyruvyl-6-hydroxy-3-cyclohexene-1-carboxylate (SEPHCHC). This chain is 2-succinyl-5-enolpyruvyl-6-hydroxy-3-cyclohexene-1-carboxylate synthase, found in Escherichia coli (strain SMS-3-5 / SECEC).